An 864-amino-acid chain; its full sequence is Alanine--tRNA ligase (864 aa).

Residues His-534, His-538, Cys-639, and His-643 each coordinate Zn(2+).

The protein belongs to the class-II aminoacyl-tRNA synthetase family. Zn(2+) serves as cofactor.

The protein localises to the cytoplasm. The catalysed reaction is tRNA(Ala) + L-alanine + ATP = L-alanyl-tRNA(Ala) + AMP + diphosphate. Functionally, catalyzes the attachment of alanine to tRNA(Ala) in a two-step reaction: alanine is first activated by ATP to form Ala-AMP and then transferred to the acceptor end of tRNA(Ala). Also edits incorrectly charged Ser-tRNA(Ala) and Gly-tRNA(Ala) via its editing domain. In Onion yellows phytoplasma (strain OY-M), this protein is Alanine--tRNA ligase.